The following is a 308-amino-acid chain: uncharacterized protein (308 aa).

The next 10 helical transmembrane spans lie at 6–26 (VVLI…FGIL), 31–51 (AKIL…FLTI), 63–83 (FLKL…LAYL), 100–120 (ILVS…LGMF), 128–148 (AIFC…YVGI), 162–182 (MAKF…FFGF), 195–215 (LNYL…LSLS), 221–241 (FGVF…PATA), 257–277 (VLLV…GTLY), and 287–307 (SIFI…WILL).

It belongs to the auxin efflux carrier (TC 2.A.69) family.

It is found in the cell membrane. This is an uncharacterized protein from Methanocaldococcus jannaschii (strain ATCC 43067 / DSM 2661 / JAL-1 / JCM 10045 / NBRC 100440) (Methanococcus jannaschii).